We begin with the raw amino-acid sequence, 288 residues long: Small ribosomal subunit protein uS15m (288 aa).

A mitochondrion-targeting transit peptide spans 1 to 50; sequence MRLFEGAFQPWKLASTNLMQQCLLLNKKSQFHTTCILQGLKKQKANQRRK.

Belongs to the universal ribosomal protein uS15 family. Component of the mitochondrial small ribosomal subunit (mt-SSU). Mature yeast 74S mitochondrial ribosomes consist of a small (37S) and a large (54S) subunit. The 37S small subunit contains a 15S ribosomal RNA (15S mt-rRNA) and at least 32 different proteins. The 54S large subunit contains a 21S rRNA (21S mt-rRNA) and at least 45 different proteins.

It localises to the mitochondrion. Functionally, component of the mitochondrial ribosome (mitoribosome), a dedicated translation machinery responsible for the synthesis of mitochondrial genome-encoded proteins, including at least some of the essential transmembrane subunits of the mitochondrial respiratory chain. The mitoribosomes are attached to the mitochondrial inner membrane and translation products are cotranslationally integrated into the membrane. The sequence is that of Small ribosomal subunit protein uS15m (mrps28) from Schizosaccharomyces pombe (strain 972 / ATCC 24843) (Fission yeast).